Reading from the N-terminus, the 297-residue chain is N-acetylmuramic acid 6-phosphate etherase (297 aa).

One can recognise an SIS domain in the interval 55–218; the sequence is AAAALKSGGR…STGAMVKFGK (164 aa). Residue glutamate 83 is the Proton donor of the active site. Glutamate 114 is an active-site residue.

Belongs to the GCKR-like family. MurNAc-6-P etherase subfamily. As to quaternary structure, homodimer.

It catalyses the reaction N-acetyl-D-muramate 6-phosphate + H2O = N-acetyl-D-glucosamine 6-phosphate + (R)-lactate. The protein operates within amino-sugar metabolism; 1,6-anhydro-N-acetylmuramate degradation. Its pathway is amino-sugar metabolism; N-acetylmuramate degradation. It functions in the pathway cell wall biogenesis; peptidoglycan recycling. In terms of biological role, specifically catalyzes the cleavage of the D-lactyl ether substituent of MurNAc 6-phosphate, producing GlcNAc 6-phosphate and D-lactate. Together with AnmK, is also required for the utilization of anhydro-N-acetylmuramic acid (anhMurNAc) either imported from the medium or derived from its own cell wall murein, and thus plays a role in cell wall recycling. The polypeptide is N-acetylmuramic acid 6-phosphate etherase (Salmonella typhi).